A 507-amino-acid polypeptide reads, in one-letter code: MNNKGRTPGSAGRTVRSSAQQNGLTMRKRDMTPTRNTNLLPNATFVGDRFLGVRLDQDELDHANHLMTSKLYSNKENLNNSMSEPNSPEKKSVEGEALKQMMRHKSTGALTDADDGDRILCYKKNLAPPPAIGYINQAKVLYSTNSVINPASSVKKSTRHVKETATKVLDGPGLTKDLYSRHLDWGCHNWVAVALGHELYLWNTETCVIKNLFEDNAPTNEGLITSVRWSQEGRYISLGYASGAVKIYDPNRPKTTEYVRELRTLRVGGASRCASIAWRKQGVMTCGYKSGDIVNHDVRISQHVVSSWGGDNGHCRDVTALEWSADENMCVSGSSDRTAKIWDGRHVRGSTVIQDPEPMFTIDEHTGQVRTAQFCSFRDGILATGGGINDGTVKLWDVKRQFQKVRELNVCETGGVGGIVFNRPYSEMLTASDDGFLRIYRFNANYKLSHEIQASNEPIMDLVGSPFDEVLIGDMEETLKVFQLFNVDKSTNILDRTAPKNVGLNVR.

Disordered regions lie at residues 1 to 39 (MNNKGRTPGSAGRTVRSSAQQNGLTMRKRDMTPTRNTNL) and 74 to 95 (NKENLNNSMSEPNSPEKKSVEG). 2 stretches are compositionally biased toward polar residues: residues 15–24 (VRSSAQQNGL) and 74–86 (NKENLNNSMSEPN). WD repeat units follow at residues 219-258 (TNEGLITSVRWSQEGRYISLGYASGAVKIYDPNRPKTTEY), 313-352 (GHCRDVTALEWSADENMCVSGSSDRTAKIWDGRHVRGSTV), 364-406 (EHTG…QKVR), and 411-450 (CETGGVGGIVFNRPYSEMLTASDDGFLRIYRFNANYKLSH).

Belongs to the WD repeat CDC20/Fizzy family.

It is found in the chromosome. Its subcellular location is the cytoplasm. Functionally, plays a role in metaphase-anaphase transition during meiosis I. Required for embryonic anterior-posterior axis formation. The polypeptide is WD repeat-containing protein fzy-1 (Caenorhabditis elegans).